A 1238-amino-acid polypeptide reads, in one-letter code: Erythroid differentiation-related factor 1 (1238 aa).

Disordered regions lie at residues 1–38 (MGDA…AQGS), 220–268 (QPVS…GSEP), 517–561 (PKKE…SDDS), and 620–647 (KKES…RGGP). Composition is skewed to low complexity over residues 9–38 (AEGP…AQGS), 223–241 (SSTA…NDSE), and 253–263 (SSVSEDPSASS). Residues 530-547 (NSDESYSEEEEEMPDSDE) are compositionally biased toward acidic residues. 2 TPR repeats span residues 693–726 (SKAY…HDTY) and 914–953 (AQAH…LGTR).

The protein localises to the nucleus. In terms of biological role, transcription factor involved in erythroid differentiation. Involved in transcriptional activation of the globin gene. In Homo sapiens (Human), this protein is Erythroid differentiation-related factor 1 (EDRF1).